The chain runs to 227 residues: GTP:AMP phosphotransferase AK3, mitochondrial (227 aa).

GTP-binding residues include G17, G19, K20, G21, and T22. An N6-succinyllysine modification is found at K20. The residue at position 34 (K34) is an N6-acetyllysine. Phosphoserine is present on S37. An NMP region spans residues 37–66; it reads SSGDLLRDNMLRGTEIGVLAKAFIDQGKLI. AMP-binding residues include S38 and R43. K57 is subject to N6-succinyllysine. K64 provides a ligand contact to AMP. N6-acetyllysine; alternate occurs at positions 64 and 80. K64 and K80 each carry N6-succinyllysine; alternate. Positions 91, 94, and 98 each coordinate AMP. Residues 127 to 164 form an LID region; the sequence is ARWIHPASGRVYNIEFNPPKTVGIDDLTGEPLIQREDD. GTP contacts are provided by R128, Y138, N139, R161, and R172. N6-acetyllysine; alternate is present on residues K174 and K189. N6-succinyllysine; alternate is present on residues K174 and K189. GTP is bound at residue T201. N6-acetyllysine is present on K203.

This sequence belongs to the adenylate kinase family. AK3 subfamily. As to quaternary structure, monomer.

The protein localises to the mitochondrion matrix. The catalysed reaction is a ribonucleoside 5'-triphosphate + AMP = a ribonucleoside 5'-diphosphate + ADP. It catalyses the reaction GTP + AMP = GDP + ADP. The enzyme catalyses ITP + AMP = IDP + ADP. Mitochondrial adenylate kinase with a specific GTP:AMP phosphotransferase activity. Could also use ITP as phosphate donor. Its physiological function is to recycle GTP into GDP which is necessary for the TCA cycle in the mitochondrial matrix. The chain is GTP:AMP phosphotransferase AK3, mitochondrial from Pongo abelii (Sumatran orangutan).